Reading from the N-terminus, the 316-residue chain is RING finger protein 148 (316 aa).

An N-terminal signal peptide occupies residues Met1–Gly12. N-linked (GlcNAc...) asparagine glycosylation occurs at Asn56. One can recognise a PA domain in the interval Val84–His178. 2 helical membrane-spanning segments follow: residues Gly173–Gly193 and Val204–Trp224. Residues Cys269–Lys310 form an RING-type; atypical zinc finger.

It localises to the membrane. This chain is RING finger protein 148 (Rnf148), found in Mus musculus (Mouse).